Here is a 306-residue protein sequence, read N- to C-terminus: UDP-3-O-acyl-N-acetylglucosamine deacetylase (306 aa).

The Zn(2+) site is built by His-79, His-238, and Asp-242. Catalysis depends on His-265, which acts as the Proton donor.

This sequence belongs to the LpxC family. The cofactor is Zn(2+).

It carries out the reaction a UDP-3-O-[(3R)-3-hydroxyacyl]-N-acetyl-alpha-D-glucosamine + H2O = a UDP-3-O-[(3R)-3-hydroxyacyl]-alpha-D-glucosamine + acetate. Its pathway is glycolipid biosynthesis; lipid IV(A) biosynthesis; lipid IV(A) from (3R)-3-hydroxytetradecanoyl-[acyl-carrier-protein] and UDP-N-acetyl-alpha-D-glucosamine: step 2/6. In terms of biological role, catalyzes the hydrolysis of UDP-3-O-myristoyl-N-acetylglucosamine to form UDP-3-O-myristoylglucosamine and acetate, the committed step in lipid A biosynthesis. The polypeptide is UDP-3-O-acyl-N-acetylglucosamine deacetylase (Hamiltonella defensa subsp. Acyrthosiphon pisum (strain 5AT)).